The sequence spans 107 residues: uncharacterized protein (107 aa).

Positions 86–107 are disordered; that stretch reads QVSNHEEDADVLETQDDNAEQV. Positions 92-107 are enriched in acidic residues; the sequence is EDADVLETQDDNAEQV.

This is an uncharacterized protein from Rickettsia prowazekii (strain Madrid E).